The sequence spans 141 residues: 3-hydroxyacyl-[acyl-carrier-protein] dehydratase FabZ (141 aa).

Residue His-48 is part of the active site.

It belongs to the thioester dehydratase family. FabZ subfamily.

Its subcellular location is the cytoplasm. It catalyses the reaction a (3R)-hydroxyacyl-[ACP] = a (2E)-enoyl-[ACP] + H2O. Its function is as follows. Involved in unsaturated fatty acids biosynthesis. Catalyzes the dehydration of short chain beta-hydroxyacyl-ACPs and long chain saturated and unsaturated beta-hydroxyacyl-ACPs. This chain is 3-hydroxyacyl-[acyl-carrier-protein] dehydratase FabZ, found in Bacillus subtilis (strain 168).